The primary structure comprises 172 residues: Small ribosomal subunit protein uS5 (172 aa).

The region spanning 17-80 is the S5 DRBM domain; the sequence is LREKMIAVNR…EEARRNMVKV (64 aa).

This sequence belongs to the universal ribosomal protein uS5 family. As to quaternary structure, part of the 30S ribosomal subunit. Contacts proteins S4 and S8.

With S4 and S12 plays an important role in translational accuracy. Functionally, located at the back of the 30S subunit body where it stabilizes the conformation of the head with respect to the body. In Verminephrobacter eiseniae (strain EF01-2), this protein is Small ribosomal subunit protein uS5.